Here is a 428-residue protein sequence, read N- to C-terminus: Enolase (428 aa).

Glutamine 163 contributes to the (2R)-2-phosphoglycerate binding site. Glutamate 205 acts as the Proton donor in catalysis. Mg(2+) is bound by residues aspartate 242, glutamate 286, and aspartate 313. (2R)-2-phosphoglycerate contacts are provided by lysine 338, arginine 367, serine 368, and lysine 389. Residue lysine 338 is the Proton acceptor of the active site.

The protein belongs to the enolase family. Mg(2+) is required as a cofactor.

It localises to the cytoplasm. Its subcellular location is the secreted. The protein resides in the cell surface. It catalyses the reaction (2R)-2-phosphoglycerate = phosphoenolpyruvate + H2O. The protein operates within carbohydrate degradation; glycolysis; pyruvate from D-glyceraldehyde 3-phosphate: step 4/5. In terms of biological role, catalyzes the reversible conversion of 2-phosphoglycerate (2-PG) into phosphoenolpyruvate (PEP). It is essential for the degradation of carbohydrates via glycolysis. In Syntrophus aciditrophicus (strain SB), this protein is Enolase.